The sequence spans 430 residues: Tol-Pal system protein TolB (430 aa).

A signal peptide spans 1-21 (MKQALRVAFGFLILWASVLHA).

This sequence belongs to the TolB family. The Tol-Pal system is composed of five core proteins: the inner membrane proteins TolA, TolQ and TolR, the periplasmic protein TolB and the outer membrane protein Pal. They form a network linking the inner and outer membranes and the peptidoglycan layer.

It is found in the periplasm. In terms of biological role, part of the Tol-Pal system, which plays a role in outer membrane invagination during cell division and is important for maintaining outer membrane integrity. TolB occupies a key intermediary position in the Tol-Pal system because it communicates directly with both membrane-embedded components, Pal in the outer membrane and TolA in the inner membrane. This Shigella dysenteriae serotype 1 (strain Sd197) protein is Tol-Pal system protein TolB.